The primary structure comprises 306 residues: Palmitoyl-protein thioesterase 1 (306 aa).

The N-terminal stretch at 1-27 is a signal peptide; that stretch reads MASPGCLWLLAVALLPWTCASRALQHL. Cys-6 carries the S-palmitoyl cysteine; by ZDHHC3 and ZDHHC7 lipid modification. Disulfide bonds link Cys-45–Cys-46, Cys-96–Cys-128, and Cys-152–Cys-160. The active site involves Ser-115. Asn-197, Asn-212, and Asn-232 each carry an N-linked (GlcNAc...) asparagine glycan. Residues Asp-233 and His-289 contribute to the active site.

Belongs to the palmitoyl-protein thioesterase family. As to quaternary structure, interacts with CLN5. Interacts with ATP5F1A and ATP5F1B. Post-translationally, glycosylated.

It localises to the lysosome. The protein resides in the secreted. Its subcellular location is the golgi apparatus. It is found in the endoplasmic reticulum. The enzyme catalyses S-hexadecanoyl-L-cysteinyl-[protein] + H2O = L-cysteinyl-[protein] + hexadecanoate + H(+). The catalysed reaction is hexadecanoyl-CoA + H2O = hexadecanoate + CoA + H(+). It catalyses the reaction S-hexadecanoyl-N-acetylcysteamine + H2O = N-acetylcysteamine + hexadecanoate + H(+). It carries out the reaction S-hexadecanoyl-N-acetylcysteine methyl ester + H2O = N-acetylcysteine methyl ester + hexadecanoate + H(+). With respect to regulation, palmitoylation reduces PPT1 enzymatic activity. Functionally, has thioesterase activity against fatty acid thioesters with 14 -18 carbons, including palmitoyl-CoA, S-palmitoyl-N-acetylcysteamine, and palmitoylated proteins. In contrast to PPT2, PPT1 can hydrolyze palmitoylated proteins and palmitoylcysteine. The protein is Palmitoyl-protein thioesterase 1 (PPT1) of Homo sapiens (Human).